A 381-amino-acid chain; its full sequence is 3-dehydroquinate synthase (381 aa).

NAD(+) is bound by residues 81–86, 115–119, 139–140, K152, and K161; these read EGESSK, GVIGD, and TS. E194, H256, and H274 together coordinate Zn(2+).

Belongs to the sugar phosphate cyclases superfamily. Dehydroquinate synthase family. It depends on Co(2+) as a cofactor. Requires Zn(2+) as cofactor. NAD(+) is required as a cofactor.

The protein resides in the cytoplasm. It catalyses the reaction 7-phospho-2-dehydro-3-deoxy-D-arabino-heptonate = 3-dehydroquinate + phosphate. It functions in the pathway metabolic intermediate biosynthesis; chorismate biosynthesis; chorismate from D-erythrose 4-phosphate and phosphoenolpyruvate: step 2/7. Functionally, catalyzes the conversion of 3-deoxy-D-arabino-heptulosonate 7-phosphate (DAHP) to dehydroquinate (DHQ). The polypeptide is 3-dehydroquinate synthase (Rhodopseudomonas palustris (strain TIE-1)).